Here is a 75-residue protein sequence, read N- to C-terminus: UPF0150 protein TM_1313 (75 aa).

This sequence belongs to the UPF0150 family.

In Thermotoga maritima (strain ATCC 43589 / DSM 3109 / JCM 10099 / NBRC 100826 / MSB8), this protein is UPF0150 protein TM_1313.